The chain runs to 596 residues: Elongation factor 4 (596 aa).

In terms of domain architecture, tr-type G spans 2–184; it reads RNIRNFSIIA…AIVHRIPPPK (183 aa). Residues 14 to 19 and 131 to 134 contribute to the GTP site; these read DHGKST and NKID.

Belongs to the TRAFAC class translation factor GTPase superfamily. Classic translation factor GTPase family. LepA subfamily.

It is found in the cell inner membrane. It carries out the reaction GTP + H2O = GDP + phosphate + H(+). Its function is as follows. Required for accurate and efficient protein synthesis under certain stress conditions. May act as a fidelity factor of the translation reaction, by catalyzing a one-codon backward translocation of tRNAs on improperly translocated ribosomes. Back-translocation proceeds from a post-translocation (POST) complex to a pre-translocation (PRE) complex, thus giving elongation factor G a second chance to translocate the tRNAs correctly. Binds to ribosomes in a GTP-dependent manner. The sequence is that of Elongation factor 4 from Xanthomonas euvesicatoria pv. vesicatoria (strain 85-10) (Xanthomonas campestris pv. vesicatoria).